Here is a 187-residue protein sequence, read N- to C-terminus: Transmembrane protein 17A (187 aa).

Transmembrane regions (helical) follow at residues 49–69, 82–102, 114–134, and 146–166; these read IFLY…VIML, FILV…LYLG, LAGF…FLLC, and AVHG…IFAL.

It belongs to the TMEM17 family. In terms of assembly, part of the tectonic-like complex (also named B9 complex).

Its subcellular location is the cell projection. The protein localises to the cilium membrane. Transmembrane component of the tectonic-like complex, a complex localized at the transition zone of primary cilia and acting as a barrier that prevents diffusion of transmembrane proteins between the cilia and plasma membranes. Required for ciliogenesis and sonic hedgehog/SHH signaling. This is Transmembrane protein 17A (tmem17-a) from Xenopus tropicalis (Western clawed frog).